The chain runs to 314 residues: Fibrinogen-like protein 1 (314 aa).

An N-terminal signal peptide occupies residues 1–22; sequence MGEIRSFLLVTIALMMGREIWA. Residues 25–59 are a coiled coil; it reads NSKCLLEQERLRAQVQQLETRVKQQQARIAQLMHE. The region spanning 76 to 308 is the Fibrinogen C-terminal domain; it reads LGGKRQYADC…SVVMKIRPND (233 aa). Intrachain disulfides connect C85/C114 and C250/C263.

Homodimer. Interacts (via the Fibrinogen C-terminal domain) with LAG3 (via Ig-like domains 1 and 2).

The protein localises to the secreted. Immune suppressive molecule that inhibits antigen-specific T-cell activation by acting as a major ligand of LAG3. Responsible for LAG3 T-cell inhibitory function. Binds LAG3 independently from MHC class II (MHC-II). Secreted by, and promotes growth of, hepatocytes. The sequence is that of Fibrinogen-like protein 1 from Mesocricetus auratus (Golden hamster).